A 142-amino-acid polypeptide reads, in one-letter code: HTH-type transcriptional repressor NsrR (142 aa).

One can recognise an HTH rrf2-type domain in the interval 2–129; the sequence is QLTSFTDYGL…DRHTLAELVE (128 aa). Residues 28–51 constitute a DNA-binding region (H-T-H motif); it reads ITEVTQVYGVSRNHMVKIINQLSH. Positions 91, 96, and 102 each coordinate [2Fe-2S] cluster.

The cofactor is [2Fe-2S] cluster.

Nitric oxide-sensitive repressor of genes involved in protecting the cell against nitrosative stress. May require iron for activity. This is HTH-type transcriptional repressor NsrR from Proteus mirabilis (strain HI4320).